Here is a 129-residue protein sequence, read N- to C-terminus: Cytochrome c oxidase subunit 13, mitochondrial (129 aa).

The N-terminal 9 residues, 1-9 (MFRQCAKRY), are a transit peptide targeting the mitochondrion. Residues 10–43 (ASSLPPNALKPAFGPPDKVAAQKFKESLMATEKH) lie on the Mitochondrial matrix side of the membrane. The chain crosses the membrane as a helical span at residues 44–71 (AKDTSNMWVKISVWVALPAIALTAVNTY). At 72–129 (FVEKEHAEHREHLKHVPDSEWPRDYEFMNIRSKPFFWGDGDKTLFWNPVVNRHIEHDD) the chain is on the mitochondrial intermembrane side.

It belongs to the cytochrome c oxidase subunit 6A family. In terms of assembly, component of the cytochrome c oxidase (complex IV, CIV), a multisubunit enzyme composed of 12 subunits. The complex is composed of a catalytic core of 3 subunits COX1, COX2 and COX3, encoded in the mitochondrial DNA, and 9 supernumerary subunits COX4, COX5A (or COX5B), COX6, COX7, COX8, COX9, COX12, COX13 and COX26, which are encoded in the nuclear genome. The complex exists as a monomer or a dimer and forms supercomplexes (SCs) in the inner mitochondrial membrane with a dimer of ubiquinol-cytochrome c oxidoreductase (cytochrome b-c1 complex, complex III, CIII), resulting in 2 different assemblies (supercomplexes III(2)IV and III(2)IV(2)). COX13 interacts with COX1 and COX3 on the intermembrane space (IMS) and COX4 on the matrix side.

Its subcellular location is the mitochondrion inner membrane. It functions in the pathway energy metabolism; oxidative phosphorylation. Functionally, component of the cytochrome c oxidase, the last enzyme in the mitochondrial electron transport chain which drives oxidative phosphorylation. The respiratory chain contains 3 multisubunit complexes succinate dehydrogenase (complex II, CII), ubiquinol-cytochrome c oxidoreductase (cytochrome b-c1 complex, complex III, CIII) and cytochrome c oxidase (complex IV, CIV), that cooperate to transfer electrons derived from NADH and succinate to molecular oxygen, creating an electrochemical gradient over the inner membrane that drives transmembrane transport and the ATP synthase. Cytochrome c oxidase is the component of the respiratory chain that catalyzes the reduction of oxygen to water. Electrons originating from reduced cytochrome c in the intermembrane space (IMS) are transferred via the dinuclear copper A center (CU(A)) of COX2 and heme A of COX1 to the active site in COX1, a binuclear center (BNC) formed by heme A3 and copper B (CU(B)). The BNC reduces molecular oxygen to 2 water molecules using 4 electrons from cytochrome c in the IMS and 4 protons from the mitochondrial matrix. The polypeptide is Cytochrome c oxidase subunit 13, mitochondrial (COX13) (Saccharomyces cerevisiae (strain ATCC 204508 / S288c) (Baker's yeast)).